The primary structure comprises 106 residues: Small ribosomal subunit protein mS33 (106 aa).

Ser2 is subject to N-acetylserine. Positions 85–94 (LKKLRGKVKP) are enriched in basic residues. A disordered region spans residues 85–106 (LKKLRGKVKPRKGEGKRAAKKK). A compositionally biased stretch (basic and acidic residues) spans 95–106 (RKGEGKRAAKKK).

It belongs to the mitochondrion-specific ribosomal protein mS33 family. As to quaternary structure, component of the mitochondrial ribosome small subunit (28S) which comprises a 12S rRNA and about 30 distinct proteins.

The protein localises to the mitochondrion. The protein is Small ribosomal subunit protein mS33 of Bos taurus (Bovine).